The chain runs to 507 residues: Cytochrome P450 monooxygenase helB2 (507 aa).

Residues 1–22 form the signal peptide; sequence MALPIILCLAVILWTSWRLLDA. Cys436 provides a ligand contact to heme.

Belongs to the cytochrome P450 family. It depends on heme as a cofactor.

Its pathway is mycotoxin biosynthesis. Cytochrome P450 monooxygenase; part of the gene cluster that mediates the biosynthesis of helvolic acid, an antibacterial nortriterpenoid. Protostadienol synthase helA cyclizes (3S)-oxidosqualene to (17Z)-protosta-17(20),24-dien-3-beta-ol (protostadienol). The synthesis of protostadienol is followed by several steps of monooxygenation, dehydrogenation, and acyl transfer to yield the final helvolic acid. Following the cyclization to the tetracyclic protostadienol by helA, cytochrome P450 monooxygenases helB1-mediated and helB2-mediated oxidation at C-4 and C-16, acyltransferase helD2-dependent acetylation of 16-OH, oxidation of C-21 by cytochrome P450 monooxygenase helB4, and short chain dehydrogenase helC-dependent oxidative decarboxylation yield the fusidane skeleton. This intermediate is further modified in three additional steps mediated by the cytochrome P450 monooxygenase helB3, the acyltransferase helD1, and the 3-ketosteroid 1-dehydrogenase helE to give helvolic acid. Compared with the late stages in the biosynthesis of helvolic acid, enzymes involved in the early stage modifications act in a relatively strict order. The hydroxylation of C-16 by helB1 and subsequent acetylation by helD2 should occur before the helB3-mediated oxidation of C-21. C-4 demethylation in fusidane-type antibiotics proceeds in an unusual manner though it is also achieved by oxidative decarboxylation. The methyl group at C-4 beta position is oxidized by helB1 and subsequently removed by the short chain dehydrogenase helC. The polypeptide is Cytochrome P450 monooxygenase helB2 (Aspergillus fumigatus (strain ATCC MYA-4609 / CBS 101355 / FGSC A1100 / Af293) (Neosartorya fumigata)).